Reading from the N-terminus, the 165-residue chain is Cyanate hydratase (165 aa).

Residues R106, E109, and S132 contribute to the active site.

This sequence belongs to the cyanase family.

The catalysed reaction is cyanate + hydrogencarbonate + 3 H(+) = NH4(+) + 2 CO2. Catalyzes the reaction of cyanate with bicarbonate to produce ammonia and carbon dioxide. The sequence is that of Cyanate hydratase from Laccaria bicolor (strain S238N-H82 / ATCC MYA-4686) (Bicoloured deceiver).